The sequence spans 237 residues: uncharacterized protein (237 aa).

One can recognise a GP-PDE domain in the interval 4-237 (QFLIAHRGYS…VKFQIAAQLY (234 aa)).

The protein to glycerophosphoryl diester phosphodiesterases (EC 3.1.4.46). It to M.genitalium MG293.

This is an uncharacterized protein from Mycoplasma pneumoniae (strain ATCC 29342 / M129 / Subtype 1) (Mycoplasmoides pneumoniae).